The sequence spans 456 residues: Histidine--tRNA ligase (456 aa).

Belongs to the class-II aminoacyl-tRNA synthetase family. As to quaternary structure, homodimer.

The protein resides in the cytoplasm. The catalysed reaction is tRNA(His) + L-histidine + ATP = L-histidyl-tRNA(His) + AMP + diphosphate + H(+). The polypeptide is Histidine--tRNA ligase (Borreliella afzelii (strain PKo) (Borrelia afzelii)).